We begin with the raw amino-acid sequence, 281 residues long: Phosphonates import ATP-binding protein PhnC (281 aa).

The 244-residue stretch at 2–245 (FELKDVTRRF…AVKEIYGTDK (244 aa)) folds into the ABC transporter domain. 34–41 (GRSGAGKS) contacts ATP.

It belongs to the ABC transporter superfamily. Phosphonates importer (TC 3.A.1.9.1) family. In terms of assembly, the complex is composed of two ATP-binding proteins (PhnC), two transmembrane proteins (PhnE) and a solute-binding protein (PhnD).

It is found in the cell inner membrane. It catalyses the reaction phosphonate(out) + ATP + H2O = phosphonate(in) + ADP + phosphate + H(+). Its function is as follows. Part of the ABC transporter complex PhnCDE involved in phosphonates import. Responsible for energy coupling to the transport system. This is Phosphonates import ATP-binding protein PhnC from Rhizobium etli (strain ATCC 51251 / DSM 11541 / JCM 21823 / NBRC 15573 / CFN 42).